Consider the following 116-residue polypeptide: Large ribosomal subunit protein bL20 (116 aa).

This sequence belongs to the bacterial ribosomal protein bL20 family.

Binds directly to 23S ribosomal RNA and is necessary for the in vitro assembly process of the 50S ribosomal subunit. It is not involved in the protein synthesizing functions of that subunit. This Thermosynechococcus vestitus (strain NIES-2133 / IAM M-273 / BP-1) protein is Large ribosomal subunit protein bL20.